Here is a 148-residue protein sequence, read N- to C-terminus: Transcriptional regulator MraZ (148 aa).

SpoVT-AbrB domains are found at residues 5-53 (ETAI…AESE) and 82-125 (AAHL…SEQA).

The protein belongs to the MraZ family. As to quaternary structure, forms oligomers.

It localises to the cytoplasm. Its subcellular location is the nucleoid. The chain is Transcriptional regulator MraZ from Stenotrophomonas maltophilia (strain R551-3).